Here is a 107-residue protein sequence, read N- to C-terminus: UPF0145 protein BH1111 (107 aa).

The protein belongs to the UPF0145 family.

The chain is UPF0145 protein BH1111 from Halalkalibacterium halodurans (strain ATCC BAA-125 / DSM 18197 / FERM 7344 / JCM 9153 / C-125) (Bacillus halodurans).